The following is a 78-amino-acid chain: Small integral membrane protein 10-like protein 2A (78 aa).

The polypeptide is Small integral membrane protein 10-like protein 2A (Homo sapiens (Human)).